The primary structure comprises 88 residues: Apolipoprotein C-I (88 aa).

Residues 1–26 (MRLLISLPVLIVVLAMALEGPAPAQA) form the signal peptide.

This sequence belongs to the apolipoprotein C1 family.

It is found in the secreted. Inhibitor of lipoprotein binding to the low density lipoprotein (LDL) receptor, LDL receptor-related protein, and very low density lipoprotein (VLDL) receptor. Associates with high density lipoproteins (HDL) and the triacylglycerol-rich lipoproteins in the plasma and makes up about 10% of the protein of the VLDL and 2% of that of HDL. Appears to interfere directly with fatty acid uptake and is also the major plasma inhibitor of cholesteryl ester transfer protein (CETP). Modulates the interaction of APOE with beta-migrating VLDL and inhibits binding of beta-VLDL to the LDL receptor-related protein. Binds free fatty acids and reduces their intracellular esterification. In Mesocricetus auratus (Golden hamster), this protein is Apolipoprotein C-I (APOC1).